We begin with the raw amino-acid sequence, 36 residues long: uncharacterized protein (36 aa).

Polar residues predominate over residues 1–14 (MNQLGSGPTKQGVA). The segment at 1-36 (MNQLGSGPTKQGVATNTGSTGTTKNNSNLSGKGWVL) is disordered. Positions 15–36 (TNTGSTGTTKNNSNLSGKGWVL) are enriched in low complexity.

This is an uncharacterized protein from Dictyostelium discoideum (Social amoeba).